Reading from the N-terminus, the 124-residue chain is Ribonuclease pancreatic (124 aa).

The segment at 1–21 (AESSAMKFQRQHMDSDGHPDT) is disordered. 2 residues coordinate substrate: K7 and R10. The active-site Proton acceptor is H12. Cystine bridges form between C26-C84, C40-C95, C58-C110, and C65-C72. Substrate-binding positions include 41–45 (KPVNT), K66, and R85. H119 functions as the Proton donor in the catalytic mechanism.

It belongs to the pancreatic ribonuclease family. As to quaternary structure, monomer. Interacts with and forms tight 1:1 complexes with RNH1. Dimerization of two such complexes may occur. Interaction with RNH1 inhibits this protein. As to expression, pancreas.

The protein resides in the secreted. It carries out the reaction an [RNA] containing cytidine + H2O = an [RNA]-3'-cytidine-3'-phosphate + a 5'-hydroxy-ribonucleotide-3'-[RNA].. The enzyme catalyses an [RNA] containing uridine + H2O = an [RNA]-3'-uridine-3'-phosphate + a 5'-hydroxy-ribonucleotide-3'-[RNA].. Functionally, endonuclease that catalyzes the cleavage of RNA on the 3' side of pyrimidine nucleotides. Acts on single-stranded and double-stranded RNA. This Galea musteloides (Common yellow-toothed cavy) protein is Ribonuclease pancreatic (RNASE1).